The primary structure comprises 248 residues: B-box zinc finger protein 24 (248 aa).

8 residues coordinate Zn(2+): Cys5, Cys8, Cys28, His33, Cys57, Cys60, Cys80, and His85. A B box-type 1; atypical zinc finger spans residues 5–47 (CDVCEKAPATVICCADEAALCPQCDIEIHAANKLASKHQRLHL). The B box-type 2; atypical zinc-finger motif lies at 57–99 (CDICQEKAAFIFCVEDRALLCRDCDESIHVANSRSANHQRFLA). The tract at residues 115–148 (IEKNQPEPSNNQQKANQIPAKSTSQQQQQPSSAT) is disordered. Over residues 120–130 (PEPSNNQQKAN) the composition is skewed to polar residues. Residues 131–148 (QIPAKSTSQQQQQPSSAT) are compositionally biased toward low complexity. The short motif at 226-229 (KKPR) is the Nuclear localization signal element. Residues 236 to 248 (DDDEEHFIVPDLG) are interaction with COP1.

In terms of assembly, interacts with COP1 WD40 domain. Interacts with HY5 and HYH. Interacts with RCD1 and TRP4. Post-translationally, COP1-mediated ubiquitination and subsequent proteasomal degradation of BBX24/STO occurs in the dark. As to expression, high expression in leaves and lower in roots and flowers.

It is found in the nucleus. Acts as a negative regulator of seedling photomorphogenesis and light-regulated inhibition of hypocotyl elongation. BBX24/STO and BBX25/STH function as transcriptional corepressors of HY5 activity, leading to the down-regulation of BBX22 expression. BBX24/STO acts additively with BBX25/STH during de-etiolation and the hypocotyl shade avoidance response. Functions as a negative regulator of photomorphogenic UV-B responses by interacting with both COP1 and HY5. May act as a transcription factor in the salt-stress response. In Arabidopsis thaliana (Mouse-ear cress), this protein is B-box zinc finger protein 24.